A 301-amino-acid chain; its full sequence is Formamidopyrimidine-DNA glycosylase (301 aa).

P2 (schiff-base intermediate with DNA) is an active-site residue. The Proton donor role is filled by E3. Residue K58 is the Proton donor; for beta-elimination activity of the active site. The DNA site is built by H109, R131, and K174. Residues 265 to 301 (SVYDREGQACRTPGCGGTVARIVQAGRSTFYCATCQK) form an FPG-type zinc finger. The active-site Proton donor; for delta-elimination activity is R291.

It belongs to the FPG family. Monomer. The cofactor is Zn(2+).

The catalysed reaction is Hydrolysis of DNA containing ring-opened 7-methylguanine residues, releasing 2,6-diamino-4-hydroxy-5-(N-methyl)formamidopyrimidine.. It catalyses the reaction 2'-deoxyribonucleotide-(2'-deoxyribose 5'-phosphate)-2'-deoxyribonucleotide-DNA = a 3'-end 2'-deoxyribonucleotide-(2,3-dehydro-2,3-deoxyribose 5'-phosphate)-DNA + a 5'-end 5'-phospho-2'-deoxyribonucleoside-DNA + H(+). Its function is as follows. Involved in base excision repair of DNA damaged by oxidation or by mutagenic agents. Acts as a DNA glycosylase that recognizes and removes damaged bases. Has a preference for oxidized purines, such as 7,8-dihydro-8-oxoguanine (8-oxoG). Has AP (apurinic/apyrimidinic) lyase activity and introduces nicks in the DNA strand. Cleaves the DNA backbone by beta-delta elimination to generate a single-strand break at the site of the removed base with both 3'- and 5'-phosphates. The polypeptide is Formamidopyrimidine-DNA glycosylase (Rhizobium leguminosarum bv. trifolii (strain WSM2304)).